Here is a 469-residue protein sequence, read N- to C-terminus: Uronate isomerase (469 aa).

This sequence belongs to the metallo-dependent hydrolases superfamily. Uronate isomerase family.

It carries out the reaction D-glucuronate = D-fructuronate. The enzyme catalyses aldehydo-D-galacturonate = keto-D-tagaturonate. It functions in the pathway carbohydrate metabolism; pentose and glucuronate interconversion. The chain is Uronate isomerase from Pectobacterium carotovorum subsp. carotovorum (strain PC1).